The sequence spans 197 residues: ATP-dependent Clp protease proteolytic subunit (197 aa).

Residue serine 98 is the Nucleophile of the active site. Histidine 123 is a catalytic residue.

The protein belongs to the peptidase S14 family. As to quaternary structure, fourteen ClpP subunits assemble into 2 heptameric rings which stack back to back to give a disk-like structure with a central cavity, resembling the structure of eukaryotic proteasomes.

It is found in the cytoplasm. It carries out the reaction Hydrolysis of proteins to small peptides in the presence of ATP and magnesium. alpha-casein is the usual test substrate. In the absence of ATP, only oligopeptides shorter than five residues are hydrolyzed (such as succinyl-Leu-Tyr-|-NHMec, and Leu-Tyr-Leu-|-Tyr-Trp, in which cleavage of the -Tyr-|-Leu- and -Tyr-|-Trp bonds also occurs).. Cleaves peptides in various proteins in a process that requires ATP hydrolysis. Has a chymotrypsin-like activity. Plays a major role in the degradation of misfolded proteins. This is ATP-dependent Clp protease proteolytic subunit from Haemophilus ducreyi (strain 35000HP / ATCC 700724).